A 188-amino-acid chain; its full sequence is Inner membrane-spanning protein YciB (188 aa).

A run of 5 helical transmembrane segments spans residues 22–42 (IYIA…VTWM), 50–70 (MTLV…VFHN), 72–92 (LFIK…LLVS), 121–141 (FAWA…AFWL), and 149–169 (FKVF…GVYI).

This sequence belongs to the YciB family.

It localises to the cell inner membrane. Functionally, plays a role in cell envelope biogenesis, maintenance of cell envelope integrity and membrane homeostasis. The protein is Inner membrane-spanning protein YciB of Pectobacterium carotovorum subsp. carotovorum (strain PC1).